Reading from the N-terminus, the 435-residue chain is Large ribosomal subunit protein mL65 (435 aa).

The protein belongs to the mitochondrion-specific ribosomal protein mL65 family. Component of the mitochondrial ribosome small subunit (28S) which comprises a 12S rRNA and about 30 distinct proteins.

The protein resides in the mitochondrion. The protein is Large ribosomal subunit protein mL65 (MRPS30) of Bos taurus (Bovine).